Here is a 596-residue protein sequence, read N- to C-terminus: uncharacterized protein (596 aa).

The tract at residues 1 to 31 (MSTSNDPVVSSHDPIKQEKEQETDLEAQVEH) is disordered. Residues 1-37 (MSTSNDPVVSSHDPIKQEKEQETDLEAQVEHKKRNER) are Cytoplasmic-facing. Basic and acidic residues predominate over residues 13-22 (DPIKQEKEQE). A helical transmembrane segment spans residues 38-58 (GNAFVGFLILIFVYYLLRGGS). The Lumenal portion of the chain corresponds to 59–596 (NDNDKQEMSH…ILVSDSGEEA (538 aa)). An N-linked (GlcNAc...) asparagine glycan is attached at Asn118. His197 lines the Zn(2+) pocket. Asp199 is an active-site residue. Asp232 is a Zn(2+) binding site. Glu266 serves as the catalytic Proton acceptor. Zn(2+) contacts are provided by Glu267 and Asp295. Residues Asn466, Asn541, and Asn555 are each glycosylated (N-linked (GlcNAc...) asparagine). Position 565 (His565) interacts with Zn(2+).

It belongs to the peptidase M20A family. Zn(2+) serves as cofactor.

Its subcellular location is the vacuole membrane. This is an uncharacterized protein from Schizosaccharomyces pombe (strain 972 / ATCC 24843) (Fission yeast).